An 889-amino-acid polypeptide reads, in one-letter code: Mixed-linked glucan synthase 2 (889 aa).

Residues 34-53 form a disordered region; the sequence is AGADGQNGRRSPVAKRVNDG. 2 consecutive transmembrane segments (helical) span residues 93 to 113 and 123 to 143; these read ILHPYRFLILLRLIAIVAFFA and GVWLWTMSMVGDVWFGFSWVL. Asp-213 is a catalytic residue. Positions 265–293 form a coiled coil; that stretch reads ELMSDHRRVRREYEEFKVRIDSLSSTIRQ. Residues Asp-411 and Asp-413 each coordinate substrate. The active site involves Asp-579. The next 6 helical transmembrane spans lie at 655-675, 685-705, 723-743, 777-797, 811-831, and 842-862; these read TYPIVTVFIFFYNLFPVMWLI, FGEYLLYLVAVIAMIHVIGMF, FYMIGSTGVYPTAVLYMALKL, LLIPTIVIIVVNVAAVGVAVG, LAVLGMVFNVWILVLLYPFAL, and AVLFVAMAMAVAAVAAMYVAF.

It belongs to the glycosyltransferase 2 family. Plant cellulose synthase-like F subfamily.

It localises to the golgi apparatus membrane. Catalyzes both beta-1,3 and beta-1,4 glycosidic linkage on beta-D-glucan. Essential for (1,3;1,4)-beta-D-glucans synthesis in grasses and cereals (Poaceae). The mixed-linked glucans (which are not present in walls of dicotyledons or most other monocotyledonous plants) are particularly important constituents of the walls of the starchy endosperm and aleurone cells of cereal grains such as oats, wheat, rice and barley. They can account for up to 70% by weight of the wall. This Oryza sativa subsp. japonica (Rice) protein is Mixed-linked glucan synthase 2 (CSLF2).